The sequence spans 308 residues: Ornithine carbamoyltransferase (308 aa).

Residues 57 to 60 (STRT), Gln84, Arg108, and 135 to 138 (HPCQ) each bind carbamoyl phosphate. L-ornithine contacts are provided by residues Asn166, Asp224, and 228–229 (SM). Residues 264 to 265 (CL) and Arg292 contribute to the carbamoyl phosphate site.

The protein belongs to the aspartate/ornithine carbamoyltransferase superfamily. OTCase family.

It localises to the cytoplasm. It carries out the reaction carbamoyl phosphate + L-ornithine = L-citrulline + phosphate + H(+). The protein operates within amino-acid biosynthesis; L-arginine biosynthesis; L-arginine from L-ornithine and carbamoyl phosphate: step 1/3. Reversibly catalyzes the transfer of the carbamoyl group from carbamoyl phosphate (CP) to the N(epsilon) atom of ornithine (ORN) to produce L-citrulline. The polypeptide is Ornithine carbamoyltransferase (Ralstonia nicotianae (strain ATCC BAA-1114 / GMI1000) (Ralstonia solanacearum)).